Consider the following 194-residue polypeptide: Imidazoleglycerol-phosphate dehydratase (194 aa).

This sequence belongs to the imidazoleglycerol-phosphate dehydratase family.

It is found in the cytoplasm. The catalysed reaction is D-erythro-1-(imidazol-4-yl)glycerol 3-phosphate = 3-(imidazol-4-yl)-2-oxopropyl phosphate + H2O. The protein operates within amino-acid biosynthesis; L-histidine biosynthesis; L-histidine from 5-phospho-alpha-D-ribose 1-diphosphate: step 6/9. The protein is Imidazoleglycerol-phosphate dehydratase of Streptococcus sanguinis (strain SK36).